Consider the following 383-residue polypeptide: tRNA(Met) cytidine acetate ligase (383 aa).

ATP-binding positions include Ile7–Gln20, Gly102, Asn160, and Arg181–Ile182.

The protein belongs to the TmcAL family.

The protein localises to the cytoplasm. The catalysed reaction is cytidine(34) in elongator tRNA(Met) + acetate + ATP = N(4)-acetylcytidine(34) in elongator tRNA(Met) + AMP + diphosphate. Functionally, catalyzes the formation of N(4)-acetylcytidine (ac(4)C) at the wobble position of elongator tRNA(Met), using acetate and ATP as substrates. First activates an acetate ion to form acetyladenylate (Ac-AMP) and then transfers the acetyl group to tRNA to form ac(4)C34. The polypeptide is tRNA(Met) cytidine acetate ligase (Exiguobacterium sibiricum (strain DSM 17290 / CCUG 55495 / CIP 109462 / JCM 13490 / 255-15)).